We begin with the raw amino-acid sequence, 271 residues long: MGLWYRMLENQDLEEVITVRVQDPRVQNEGSWNSYVDYKIFLHTNSKAFTAKTSCVRRRYREFVWLRKQLQRNAGLVPVPELPGKSTFFGGSDEFIEKRRQGLQHFLEKVLQSVVLLSDSQLHLFLQSQLSVPEIEACVQGRGAMTVSDAILSYAMSNCGWAQEERQSTSHLAKGDQLNSCCFLPRSGRRSSPSPPLSEEKEQLETWAPVMDSEGPSSESPTLLPSSSLPACWDPARPEEGLSVSQPARRAVAADQAGPMEPTQLDTAWDK.

A PX domain is found at 16 to 132 (VITVRVQDPR…HLFLQSQLSV (117 aa)). Positions 59, 85, and 99 each coordinate a 1,2-diacyl-sn-glycero-3-phospho-(1D-myo-inositol-3-phosphate). Positions 135–139 (IEACV) are important for membrane trafficking. The segment at 185-271 (PRSGRRSSPS…PTQLDTAWDK (87 aa)) is disordered. Residues 213 to 230 (SEGPSSESPTLLPSSSLP) are compositionally biased toward low complexity.

This sequence belongs to the sorting nexin family. As to quaternary structure, monomer. Interacts with TRPV3; this interaction promotes TRPV3 trafficking from the cell membrane to lysosome for degradation.

Its subcellular location is the cell membrane. It localises to the endosome. The protein resides in the cytoplasm. In terms of biological role, phosphoinositide-binding protein involved in protein sorting and membrane trafficking in endosomes. Regulates the levels of TRPV3 by promoting its trafficking from the cell membrane to lysosome for degradation. The sequence is that of Sorting nexin-11 (Snx11) from Mus musculus (Mouse).